A 524-amino-acid polypeptide reads, in one-letter code: Phosphoenolpyruvate carboxykinase (ATP) (524 aa).

Substrate contacts are provided by Arg-52, Tyr-188, and Lys-194. ATP is bound by residues Lys-194, His-213, and 229–237 (GLSGTGKTT). Lys-194 and His-213 together coordinate Mn(2+). Asp-250 provides a ligand contact to Mn(2+). ATP-binding residues include Glu-278, Arg-314, and Thr-439. Arg-314 contacts substrate.

It belongs to the phosphoenolpyruvate carboxykinase (ATP) family. It depends on Mn(2+) as a cofactor.

The protein resides in the cytoplasm. The enzyme catalyses oxaloacetate + ATP = phosphoenolpyruvate + ADP + CO2. The protein operates within carbohydrate biosynthesis; gluconeogenesis. Functionally, involved in the gluconeogenesis. Catalyzes the conversion of oxaloacetate (OAA) to phosphoenolpyruvate (PEP) through direct phosphoryl transfer between the nucleoside triphosphate and OAA. The polypeptide is Phosphoenolpyruvate carboxykinase (ATP) (Campylobacter jejuni subsp. jejuni serotype O:23/36 (strain 81-176)).